Reading from the N-terminus, the 198-residue chain is Crinkler effector protein BLC01 (198 aa).

The signal sequence occupies residues 1-15 (MMVKLICAIVDIAGA). The tract at residues 16–55 (AFPIDIDTNELVGDFKKVIKAENSRTIACDANDLRLFLAK) is LQLFLAK domain. The tract at residues 56–113 (TDGRWLTEFEVQNGVADISVFEELDVVGAPLNMIGLSEETVSSVAITKELVKAKKTPL) is DWL domain. An HVLVXXP motif motif is present at residues 114-119 (HVLVVP).

The protein belongs to the Crinkler effector family.

Its subcellular location is the secreted. It localises to the host cell. Its function is as follows. Secreted effector that elicits necrosis in host plants, a characteristic of plant innate immunity. The sequence is that of Crinkler effector protein BLC01 from Bremia lactucae (Lettuce downy mildew).